The chain runs to 308 residues: Oligopeptide transport system permease protein AmiD (308 aa).

Transmembrane regions (helical) follow at residues 43-63 (TVVM…YPMF), 111-131 (ILIS…VGGI), 145-167 (VYNV…SIGA), 171-193 (NLIF…VQIL), 234-254 (MLPS…GLPI), and 274-294 (AYLF…LFVV). The ABC transmembrane type-1 domain occupies 107–295 (ARNSILISVI…LVSLSLFVVG (189 aa)).

Belongs to the binding-protein-dependent transport system permease family. OppBC subfamily.

Its subcellular location is the cell membrane. In terms of biological role, part of the binding-protein-dependent transport system for oligopeptides; probably responsible for the translocation of the substrate across the membrane. The protein is Oligopeptide transport system permease protein AmiD (amiD) of Streptococcus pneumoniae (strain ATCC BAA-255 / R6).